The sequence spans 120 residues: Large ribosomal subunit protein bL20 (120 aa).

This sequence belongs to the bacterial ribosomal protein bL20 family.

Binds directly to 23S ribosomal RNA and is necessary for the in vitro assembly process of the 50S ribosomal subunit. It is not involved in the protein synthesizing functions of that subunit. This is Large ribosomal subunit protein bL20 from Methylobacillus flagellatus (strain ATCC 51484 / DSM 6875 / VKM B-1610 / KT).